The chain runs to 362 residues: Peptide chain release factor 1 (362 aa).

Position 240 is an N5-methylglutamine (Gln-240).

It belongs to the prokaryotic/mitochondrial release factor family. In terms of processing, methylated by PrmC. Methylation increases the termination efficiency of RF1.

The protein localises to the cytoplasm. Functionally, peptide chain release factor 1 directs the termination of translation in response to the peptide chain termination codons UAG and UAA. This is Peptide chain release factor 1 from Bifidobacterium longum (strain DJO10A).